A 754-amino-acid chain; its full sequence is 5-methyltetrahydropteroyltriglutamate--homocysteine methyltransferase (754 aa).

5-methyltetrahydropteroyltri-L-glutamate-binding positions include Arg-17–Lys-20 and Lys-110. Residues Ile-421–Ser-423 and Glu-474 each bind L-homocysteine. L-methionine is bound by residues Ile-421–Ser-423 and Glu-474. Residues Arg-505–Cys-506 and Trp-551 contribute to the 5-methyltetrahydropteroyltri-L-glutamate site. L-homocysteine is bound at residue Asp-589. An L-methionine-binding site is contributed by Asp-589. Glu-595 contacts 5-methyltetrahydropteroyltri-L-glutamate. His-631, Cys-633, and Glu-655 together coordinate Zn(2+). His-684 acts as the Proton donor in catalysis. Position 716 (Cys-716) interacts with Zn(2+).

It belongs to the vitamin-B12 independent methionine synthase family. Zn(2+) serves as cofactor.

It carries out the reaction 5-methyltetrahydropteroyltri-L-glutamate + L-homocysteine = tetrahydropteroyltri-L-glutamate + L-methionine. It functions in the pathway amino-acid biosynthesis; L-methionine biosynthesis via de novo pathway; L-methionine from L-homocysteine (MetE route): step 1/1. Its function is as follows. Catalyzes the transfer of a methyl group from 5-methyltetrahydrofolate to homocysteine resulting in methionine formation. The chain is 5-methyltetrahydropteroyltriglutamate--homocysteine methyltransferase from Synechococcus sp. (strain JA-2-3B'a(2-13)) (Cyanobacteria bacterium Yellowstone B-Prime).